Reading from the N-terminus, the 1199-residue chain is MLRNKRKAGKLVRAPQKAARIDSQANAHAEDHSDLEHSAPSTDDGFDEPKPTIAKKVSLSTAIPKKNKFKQRDDTKNVKPPTLEEMKELRDTQNLFHSNLFKLQVKEMLEELQLKQKYTDFIENWLESFTVFTRQLKDGLMERSHLEIPLKLSQKPTGFVFSKPTREPYLIGAAATGTLLGPKIVVDVALEMPKESLHKEDYLNLRYDQKRALYLTYVTERMKESPAYAQDQFNFNYYANNPLKPVLELTPGTKQVNKHLQVRLFITAPLSSFKPGRFVPWNNNIRPSYYGDEWDEKEPLPSTQHYNANVLFDLTLSENQTHLDKAFKGRRNFQDGLLLLKVWLRQRQLDIGYSGFGAHILSAFIVYLNTQRILHHSSSSYQVARTVWNQLANTDWTKGISLSLVPIQTEELNKFAEQYDVCFIDFTGQHNLCANIPLYLYQRVREEAKLAVELLNDMKLNSFPLIFMQKCPLYSRVDNILKISNYSCINQMLTLHSQPRFKYDFAKYGYPQLLQLLTELLKKGLAERVHSILPLETATPAWPVENKAPVIGNYIQLGLILQPEHAYEVLNKGPAANDDPEGAEEFRRFWGEKSNLRRFQDGSITEAVVWGSAQDSPAKKRLIVRQIVLHLLEHQLQLDSKDVQYIAGELDQVYKLSPWFKVNKLKTKLSLDQDTDAEALSPHAIRSYDELARQLHGLNDLPLEIVSISGVSPVFRYCEPQPVLPQARLVENRILTSSIQRVVIQLGQSGKWPNELSALRALKTAFLIEIGEKLEAQCHLHWMMSADGLLVLKQGYCFLIELAHNKELALLKQEVTERGITTYIDNAASRSLERQHYILPKVSGALHSLHQTYSAFGSTVLLAKRWLATQLLDDGLWPDMATELLVAHLFQQRYAPQPIEAPQTGFIRFLQLLAFSDFNGELFLLNFNNSWQEQQVADLEHNYRSNRQSYPPLAVATSYDMQHAGRLWTSEESPSQRVLGHVTRLARHALEIIETSLLSKDLRFVRPAQLFRASNEGYDLVIQFKPDLVPNSLSYDLGSPFVSFSQPNFNLTRAGSGDVARIVGLLRSAYSDFAAFFYNPHGGKELAIVWRPPTEFAAKPFKVTELQACSPCGNGRVQVIKETLVEDFKLLLKDFYLRIATPEELKREQREHQKPKRYFDAKQTEEKSTPKPKVRKANEKEAPPKKKRLIKSSALKALK.

The span at 1–10 (MLRNKRKAGK) shows a compositional bias: basic residues. Disordered regions lie at residues 1 to 51 (MLRN…EPKP) and 1146 to 1199 (KREQ…KALK). 2 stretches are compositionally biased toward basic and acidic residues: residues 28-37 (HAEDHSDLEH) and 1146-1169 (KREQREHQKPKRYFDAKQTEEKST).

The protein belongs to the NRAP family. Part of the small subunit (SSU) processome, composed of more than 70 proteins and the RNA chaperone small nucleolar RNA (snoRNA) U3.

The protein resides in the nucleus. The protein localises to the nucleolus. It is found in the chromosome. Part of the small subunit (SSU) processome, first precursor of the small eukaryotic ribosomal subunit. During the assembly of the SSU processome in the nucleolus, many ribosome biogenesis factors, an RNA chaperone and ribosomal proteins associate with the nascent pre-rRNA and work in concert to generate RNA folding, modifications, rearrangements and cleavage as well as targeted degradation of pre-ribosomal RNA by the RNA exosome. The protein is Nucleolar protein 6 of Drosophila yakuba (Fruit fly).